We begin with the raw amino-acid sequence, 498 residues long: MTSRGNHGSKTSSDKHLGDSDFVVVANRLPVDQVRLPDGTAIWKRSPGGLVTALEPLLRQRRGAWVGWPGVINDNVDLDLTIKSIVQDGLTLYPVRLNTHDVAEYYEGFSNATLWPLYHDVIVKPIYHCEWWERYVDVNRRFAETTSRTAAYGGTVWVQDYQLQLVPKMLRIMRPDLTIGFFLHIPFPPVELFMQIPWRTEIIEGLLGADLVGFHLTSGAQNFLFLSRHLLGANTSRGLVGVRSRFGEVQLKSHTVQVGAFPISIDSKEIDQATRDRNVRRRAREIRAELGNPRKILLGVDRLDYTKGIDVRLRAFAELLAEGRAKRDDTVLVQLATPSRERVESYKILRNDIERQVGHINGEYGEVGHPVVHYLHRPIPRDELIAFYVASDVMLVTPLRDGMNLVAKEYVACRNDLGGALVLSEFTGAAAELRQAYLVNPHDLEGVKDTIEAALNQLAEEARRRMRSLRRQVLAHDVDRWARSFLDALAEAPARDAT.

Arg28 serves as a coordination point for D-glucose 6-phosphate. 48–49 (GG) contributes to the UDP-alpha-D-glucose binding site. Residues Tyr106 and Asp160 each coordinate D-glucose 6-phosphate. 2 residues coordinate UDP-alpha-D-glucose: Arg302 and Lys307. D-glucose 6-phosphate is bound at residue Arg340. A UDP-alpha-D-glucose-binding site is contributed by 405-409 (LVAKE).

Belongs to the glycosyltransferase 20 family. As to quaternary structure, homotetramer.

The enzyme catalyses ADP-alpha-D-glucose + D-glucose 6-phosphate = alpha,alpha-trehalose 6-phosphate + ADP + H(+). The catalysed reaction is CDP-alpha-D-glucose + D-glucose 6-phosphate = alpha,alpha-trehalose 6-phosphate + CDP + H(+). It carries out the reaction GDP-alpha-D-glucose + D-glucose 6-phosphate = alpha,alpha-trehalose 6-phosphate + GDP + H(+). It catalyses the reaction TDP-alpha-D-glucose + D-glucose 6-phosphate = 5-methyl-UDP + alpha,alpha-trehalose 6-phosphate + H(+). The enzyme catalyses D-glucose 6-phosphate + UDP-alpha-D-glucose = alpha,alpha-trehalose 6-phosphate + UDP + H(+). It participates in glycan biosynthesis; trehalose biosynthesis. Functionally, probably involved in the osmoprotection via the biosynthesis of trehalose and in the production of glycogen and alpha-glucan via the TreS-Pep2 branch involved in the biosynthesis of maltose-1-phosphate (M1P). Catalyzes the transfer of glucose from UDP-glucose (UDP-Glc) to D-glucose 6-phosphate (Glc-6-P) to form trehalose-6-phosphate. Probably also able to use ADP-Glc, CDP-Glc, GDP-Glc and TDP-Glc as glucosyl donors. The sequence is that of Trehalose-6-phosphate synthase from Mycobacterium leprae (strain TN).